The following is a 260-amino-acid chain: Phosphate import ATP-binding protein PstB 1 (260 aa).

The ABC transporter domain maps to 13 to 255 (VRVRDLNLWY…PHTKKAEDYI (243 aa)). Residue 45-52 (GPSGCGKS) participates in ATP binding.

The protein belongs to the ABC transporter superfamily. Phosphate importer (TC 3.A.1.7) family. As to quaternary structure, the complex is composed of two ATP-binding proteins (PstB), two transmembrane proteins (PstC and PstA) and a solute-binding protein (PstS).

It localises to the cell inner membrane. The enzyme catalyses phosphate(out) + ATP + H2O = ADP + 2 phosphate(in) + H(+). In terms of biological role, part of the ABC transporter complex PstSACB involved in phosphate import. Responsible for energy coupling to the transport system. In Chromohalobacter salexigens (strain ATCC BAA-138 / DSM 3043 / CIP 106854 / NCIMB 13768 / 1H11), this protein is Phosphate import ATP-binding protein PstB 1.